Reading from the N-terminus, the 319-residue chain is CD2 antigen cytoplasmic tail-binding protein 2 homolog (319 aa).

Disordered stretches follow at residues 1 to 57 (MASK…EDDV) and 105 to 124 (NAFDPAKDEENSSDEEKNEP). Basic and acidic residues predominate over residues 12–24 (KVKEESFKKHTLD). A phosphoserine mark is found at Ser-25 and Ser-30. The segment covering 25-47 (SDEEDSDDYEREYLNDSDIEGGE) has biased composition (acidic residues). Tyr-37 carries the post-translational modification Phosphotyrosine. Ser-41 carries the post-translational modification Phosphoserine. The span at 109 to 124 (PAKDEENSSDEEKNEP) shows a compositional bias: basic and acidic residues. One can recognise a GYF domain in the interval 260–316 (EVTWEFKWSQDETDIQGPFSTEKMLKWSQENYFKNGVYVRKCGENTNFYTSNRIDFD).

It is found in the nucleus. Required for embryonic epithelial tissue repair, but not for the assembly of the actomyosin cable at the wound edge. Probably acts downstream of rl in the regulation of Ddc and msn transcription to promote wound healing. The polypeptide is CD2 antigen cytoplasmic tail-binding protein 2 homolog (holn1) (Drosophila melanogaster (Fruit fly)).